The chain runs to 485 residues: T-complex protein 1 subunit theta (485 aa).

This sequence belongs to the TCP-1 chaperonin family. In terms of assembly, component of the T-complex protein 1 (TCP1) complex.

It localises to the cytoplasm. Its function is as follows. Molecular chaperone; assists the folding of proteins upon ATP hydrolysis. The protein is T-complex protein 1 subunit theta (CCT8) of Encephalitozoon cuniculi (strain GB-M1) (Microsporidian parasite).